The chain runs to 132 residues: ATP synthase epsilon chain (132 aa).

Positions 88-102 (IDKERAEAARQRAQE) are enriched in basic and acidic residues. The disordered stretch occupies residues 88 to 112 (IDKERAEAARQRAQERLNSQSDDTD).

This sequence belongs to the ATPase epsilon chain family. As to quaternary structure, F-type ATPases have 2 components, CF(1) - the catalytic core - and CF(0) - the membrane proton channel. CF(1) has five subunits: alpha(3), beta(3), gamma(1), delta(1), epsilon(1). CF(0) has three main subunits: a, b and c. The F(1)F(0) complex interacts with SpoIIIJ and YqjG; YqgA is found in the same complex.

The protein resides in the cell membrane. Produces ATP from ADP in the presence of a proton gradient across the membrane. The sequence is that of ATP synthase epsilon chain (atpC) from Bacillus subtilis (strain 168).